Reading from the N-terminus, the 146-residue chain is Snaclec alboaggregin-B subunit beta (146 aa).

An N-terminal signal peptide occupies residues 1–23; the sequence is MGRFIFGSFGLLVLFLSLSGTGA. The C-type lectin domain maps to 24 to 143; that stretch reads DCPSDWSSYD…CSRTYPFVCK (120 aa). Disulfide bonds link cysteine 25–cysteine 36, cysteine 53–cysteine 142, and cysteine 119–cysteine 134.

This sequence belongs to the snaclec family. In terms of assembly, heterodimer of subunits alpha and beta; disulfide-linked. Expressed by the venom gland.

It is found in the secreted. Weakly agglutinates platelets at high doses by binding to GPIbalpha (GP1BA). The chain is Snaclec alboaggregin-B subunit beta from Trimeresurus albolabris (White-lipped pit viper).